The primary structure comprises 71 residues: uncharacterized protein (71 aa).

The protein belongs to the ycf40 family.

It localises to the plastid. The protein localises to the chloroplast. This is an uncharacterized protein from Porphyra purpurea (Red seaweed).